A 584-amino-acid polypeptide reads, in one-letter code: Arginine--tRNA ligase (584 aa).

Positions 126-136 (PNIAKEMHVGH) match the 'HIGH' region motif.

Belongs to the class-I aminoacyl-tRNA synthetase family. In terms of assembly, monomer.

It is found in the cytoplasm. The enzyme catalyses tRNA(Arg) + L-arginine + ATP = L-arginyl-tRNA(Arg) + AMP + diphosphate. The polypeptide is Arginine--tRNA ligase (Synechococcus elongatus (strain ATCC 33912 / PCC 7942 / FACHB-805) (Anacystis nidulans R2)).